The primary structure comprises 270 residues: Hematopoietically-expressed homeobox protein HHEX (270 aa).

An interaction with SOX13 region spans residues M1 to R137. Phosphoserine is present on S53. Residues R137–K196 constitute a DNA-binding region (homeobox). The tract at residues R137–G270 is required for WNT signaling induction. The tract at residues R194 to G270 is disordered. Positions P222 to A241 are enriched in polar residues. Over residues E244–I260 the composition is skewed to acidic residues.

As to quaternary structure, interacts with CD81; the interaction prevents nuclear translocation of HHEX. Interacts (via N-terminus) with SOX13; abolishes the SOX13-mediated inhibition of WNT-mediated transcriptional activity via competitive inhibition of the SOX13-TCF7 complex. Interacts with EIF4E; the interaction inhibits EIF4E-mediated mRNA nuclear export. In terms of tissue distribution, liver and promyelocytic leukemia cell line HL-60.

The protein localises to the nucleus. It localises to the nuclear body. The protein resides in the cytoplasm. Its function is as follows. Recognizes the DNA sequence 5'-ATTAA-3'. Transcriptional repressor. Activator of WNT-mediated transcription in conjunction with CTNNB1. Establishes anterior identity at two levels; acts early to enhance canonical WNT-signaling by repressing expression of TLE4, and acts later to inhibit NODAL-signaling by directly targeting NODAL. Inhibits EIF4E-mediated mRNA nuclear export. May play a role in hematopoietic differentiation. The polypeptide is Hematopoietically-expressed homeobox protein HHEX (HHEX) (Homo sapiens (Human)).